We begin with the raw amino-acid sequence, 481 residues long: Ribulose bisphosphate carboxylase large chain (481 aa).

A propeptide spanning residues 1–2 is cleaved from the precursor; it reads MS. Pro-3 bears the N-acetylproline mark. Residue Lys-14 is modified to N6,N6,N6-trimethyllysine. Asn-123 and Thr-173 together coordinate substrate. Catalysis depends on Lys-175, which acts as the Proton acceptor. Lys-177 serves as a coordination point for substrate. Mg(2+) contacts are provided by Lys-201, Asp-203, and Glu-204. At Lys-201 the chain carries N6-carboxylysine. Catalysis depends on His-294, which acts as the Proton acceptor. Residues Arg-295, His-327, and Ser-379 each coordinate substrate.

The protein belongs to the RuBisCO large chain family. Type I subfamily. In terms of assembly, heterohexadecamer of 8 large chains and 8 small chains; disulfide-linked. The disulfide link is formed within the large subunit homodimers. Mg(2+) is required as a cofactor. The disulfide bond which can form in the large chain dimeric partners within the hexadecamer appears to be associated with oxidative stress and protein turnover.

It localises to the plastid. The enzyme catalyses 2 (2R)-3-phosphoglycerate + 2 H(+) = D-ribulose 1,5-bisphosphate + CO2 + H2O. The catalysed reaction is D-ribulose 1,5-bisphosphate + O2 = 2-phosphoglycolate + (2R)-3-phosphoglycerate + 2 H(+). Its function is as follows. RuBisCO catalyzes two reactions: the carboxylation of D-ribulose 1,5-bisphosphate, the primary event in carbon dioxide fixation, as well as the oxidative fragmentation of the pentose substrate in the photorespiration process. Both reactions occur simultaneously and in competition at the same active site. The sequence is that of Ribulose bisphosphate carboxylase large chain from Cuscuta gronovii (Common dodder).